The chain runs to 423 residues: UDP-N-acetylglucosamine 1-carboxyvinyltransferase 2 (423 aa).

23 to 24 (KN) contributes to the phosphoenolpyruvate binding site. UDP-N-acetyl-alpha-D-glucosamine is bound at residue Arg-93. Cys-117 serves as the catalytic Proton donor. Residue Cys-117 is modified to 2-(S-cysteinyl)pyruvic acid O-phosphothioketal. Residues 122 to 126 (RPIDQ), Asp-305, and Ile-327 each bind UDP-N-acetyl-alpha-D-glucosamine.

The protein belongs to the EPSP synthase family. MurA subfamily.

It localises to the cytoplasm. It carries out the reaction phosphoenolpyruvate + UDP-N-acetyl-alpha-D-glucosamine = UDP-N-acetyl-3-O-(1-carboxyvinyl)-alpha-D-glucosamine + phosphate. Its pathway is cell wall biogenesis; peptidoglycan biosynthesis. Cell wall formation. Adds enolpyruvyl to UDP-N-acetylglucosamine. The chain is UDP-N-acetylglucosamine 1-carboxyvinyltransferase 2 from Listeria monocytogenes serovar 1/2a (strain ATCC BAA-679 / EGD-e).